A 280-amino-acid chain; its full sequence is Bicarbonate transport system permease protein CmpB (280 aa).

7 helical membrane-spanning segments follow: residues 32 to 52 (PIFGILGFLLLWQLISSAGLI), 99 to 119 (YSLAAIVGISTGILVGTQPLL), 126 to 146 (IFQFLRMVAPLAWVPIALVAL), 153 to 173 (AIFVIFITSVWPILINTTEGV), 198 to 218 (ILIPSALPYIFTGLRIAIGLA), 219 to 239 (WLAIIAAEIVMSGIVGIGFFI), and 251 to 271 (IILAVFYIGAVGLLLDRGIAY). One can recognise an ABC transmembrane type-1 domain in the interval 88 to 266 (TLASLGRVAQ…YIGAVGLLLD (179 aa)).

Belongs to the binding-protein-dependent transport system permease family. In terms of assembly, the complex is composed of two ATP-binding proteins (CmpC and CmpD), a transmembrane protein (CmpB) and a solute-binding protein (CmpA).

The protein resides in the cell inner membrane. Its function is as follows. Part of the ABC transporter complex CmpABCD involved in bicarbonate transport. Probably responsible for the translocation of the substrate across the membrane. The protein is Bicarbonate transport system permease protein CmpB (cmpB) of Synechocystis sp. (strain ATCC 27184 / PCC 6803 / Kazusa).